The following is a 177-amino-acid chain: Protein CutA 1, chloroplastic (177 aa).

The N-terminal 60 residues, 1-60, are a transit peptide targeting the chloroplast; that stretch reads MPLLPSPLGSLSAAATAAPRRAAAAAGLSPLLLRRRAPIAGALLFLSLGAFAGVRSLSSS.

The protein belongs to the CutA family. Homotrimer.

The protein localises to the plastid. Its subcellular location is the chloroplast. This chain is Protein CutA 1, chloroplastic (CUTA1), found in Oryza sativa subsp. japonica (Rice).